The sequence spans 347 residues: Isopentenyl-diphosphate delta-isomerase (347 aa).

The interval 1 to 31 (MDESNSQFEKRKRDHIRIALDPRSQTDGQNG) is disordered. Over residues 8–20 (FEKRKRDHIRIAL) the composition is skewed to basic and acidic residues. Residue 11–12 (RK) participates in substrate binding. Residues S72, 73-75 (SMT), S103, and N132 each bind FMN. Substrate is bound at residue 103–105 (SQR). Q166 contributes to the substrate binding site. E167 serves as a coordination point for Mg(2+). FMN is bound by residues K198, S223, T228, 279–281 (GVR), and 300–301 (AK).

The protein belongs to the IPP isomerase type 2 family. As to quaternary structure, homooctamer. Dimer of tetramers. FMN serves as cofactor. NADPH is required as a cofactor. Requires Mg(2+) as cofactor.

It localises to the cytoplasm. It carries out the reaction isopentenyl diphosphate = dimethylallyl diphosphate. Involved in the biosynthesis of isoprenoids. Catalyzes the 1,3-allylic rearrangement of the homoallylic substrate isopentenyl (IPP) to its allylic isomer, dimethylallyl diphosphate (DMAPP). The polypeptide is Isopentenyl-diphosphate delta-isomerase (Bdellovibrio bacteriovorus (strain ATCC 15356 / DSM 50701 / NCIMB 9529 / HD100)).